The primary structure comprises 42 residues: MSNTGTTGRIPLWLVATVAGLAVIALLGVFFYGSYSGLGSSL.

The helical transmembrane segment at 10–30 (IPLWLVATVAGLAVIALLGVF) threads the bilayer.

It belongs to the PsbJ family. As to quaternary structure, PSII is composed of 1 copy each of membrane proteins PsbA, PsbB, PsbC, PsbD, PsbE, PsbF, PsbH, PsbI, PsbJ, PsbK, PsbL, PsbM, PsbT, PsbX, PsbY, PsbZ, Psb30/Ycf12, at least 3 peripheral proteins of the oxygen-evolving complex and a large number of cofactors. It forms dimeric complexes.

It is found in the plastid. The protein resides in the chloroplast thylakoid membrane. Its function is as follows. One of the components of the core complex of photosystem II (PSII). PSII is a light-driven water:plastoquinone oxidoreductase that uses light energy to abstract electrons from H(2)O, generating O(2) and a proton gradient subsequently used for ATP formation. It consists of a core antenna complex that captures photons, and an electron transfer chain that converts photonic excitation into a charge separation. The sequence is that of Photosystem II reaction center protein J from Chlorokybus atmophyticus (Soil alga).